Consider the following 210-residue polypeptide: Adenylate kinase (210 aa).

10–15 (GSGKGT) is a binding site for ATP. The interval 30–59 (STGDLFRANISNATPLGKEIKQIVENGQLV) is NMP. AMP is bound by residues Thr-31, Arg-36, 57–59 (QLV), 85–88 (GFPR), and Gln-92. Residues 121 to 158 (GRRICQSCGGIFNIYTLPTKEKGICDLCKGSLYQRKDD) form an LID region. Arg-122 provides a ligand contact to ATP. 2 residues coordinate Zn(2+): Cys-125 and Cys-128. Position 131-132 (131-132 (IF)) interacts with ATP. Positions 145 and 148 each coordinate Zn(2+). AMP contacts are provided by Arg-155 and Arg-166. Lys-194 provides a ligand contact to ATP.

The protein belongs to the adenylate kinase family. Monomer.

Its subcellular location is the cytoplasm. The catalysed reaction is AMP + ATP = 2 ADP. The protein operates within purine metabolism; AMP biosynthesis via salvage pathway; AMP from ADP: step 1/1. Catalyzes the reversible transfer of the terminal phosphate group between ATP and AMP. Plays an important role in cellular energy homeostasis and in adenine nucleotide metabolism. The chain is Adenylate kinase from Borrelia turicatae (strain 91E135).